Consider the following 85-residue polypeptide: Elongation factor 1-beta (85 aa).

Belongs to the EF-1-beta/EF-1-delta family.

Its function is as follows. Promotes the exchange of GDP for GTP in EF-1-alpha/GDP, thus allowing the regeneration of EF-1-alpha/GTP that could then be used to form the ternary complex EF-1-alpha/GTP/AAtRNA. This Methanosphaerula palustris (strain ATCC BAA-1556 / DSM 19958 / E1-9c) protein is Elongation factor 1-beta.